Consider the following 530-residue polypeptide: Glucose-6-phosphate isomerase (530 aa).

Glu356 serves as the catalytic Proton donor. Active-site residues include His387 and Lys502.

This sequence belongs to the GPI family.

It localises to the cytoplasm. The enzyme catalyses alpha-D-glucose 6-phosphate = beta-D-fructose 6-phosphate. The protein operates within carbohydrate biosynthesis; gluconeogenesis. It functions in the pathway carbohydrate degradation; glycolysis; D-glyceraldehyde 3-phosphate and glycerone phosphate from D-glucose: step 2/4. Its function is as follows. Catalyzes the reversible isomerization of glucose-6-phosphate to fructose-6-phosphate. This Borrelia garinii subsp. bavariensis (strain ATCC BAA-2496 / DSM 23469 / PBi) (Borreliella bavariensis) protein is Glucose-6-phosphate isomerase.